The following is a 326-amino-acid chain: Phospho-N-acetylmuramoyl-pentapeptide-transferase (326 aa).

The next 9 membrane-spanning stretches (helical) occupy residues 3–23 (ISIS…PAFI), 51–71 (TMGG…VALF), 79–99 (VGMI…DDFL), 115–135 (LALQ…GGDM), 138–158 (VFGY…FWLV), 169–189 (GIDG…GVIA), 195–215 (MDIL…FVFN), 221–243 (VFMG…MALH), and 306–326 (FFFW…LYLM).

The protein belongs to the glycosyltransferase 4 family. MraY subfamily. Mg(2+) is required as a cofactor.

The protein resides in the cell membrane. It carries out the reaction UDP-N-acetyl-alpha-D-muramoyl-L-alanyl-gamma-D-glutamyl-L-lysyl-D-alanyl-D-alanine + di-trans,octa-cis-undecaprenyl phosphate = Mur2Ac(oyl-L-Ala-gamma-D-Glu-L-Lys-D-Ala-D-Ala)-di-trans,octa-cis-undecaprenyl diphosphate + UMP. Its pathway is cell wall biogenesis; peptidoglycan biosynthesis. Catalyzes the initial step of the lipid cycle reactions in the biosynthesis of the cell wall peptidoglycan: transfers peptidoglycan precursor phospho-MurNAc-pentapeptide from UDP-MurNAc-pentapeptide onto the lipid carrier undecaprenyl phosphate, yielding undecaprenyl-pyrophosphoryl-MurNAc-pentapeptide, known as lipid I. The protein is Phospho-N-acetylmuramoyl-pentapeptide-transferase of Streptococcus pneumoniae (strain Taiwan19F-14).